We begin with the raw amino-acid sequence, 442 residues long: tRNA modification GTPase MnmE (442 aa).

(6S)-5-formyl-5,6,7,8-tetrahydrofolate contacts are provided by arginine 21, glutamate 79, and lysine 118. Residues 215-365 form the TrmE-type G domain; the sequence is GLKIAIVGKP…LENKLSSYCN (151 aa). GTP is bound by residues 225–230, 244–250, and 269–272; these read NVGKSS, TNEAGTT, and DTAG. Residues serine 229 and threonine 250 each coordinate Mg(2+). Residue lysine 442 coordinates (6S)-5-formyl-5,6,7,8-tetrahydrofolate.

Belongs to the TRAFAC class TrmE-Era-EngA-EngB-Septin-like GTPase superfamily. TrmE GTPase family. Homodimer. Heterotetramer of two MnmE and two MnmG subunits. K(+) serves as cofactor.

It localises to the cytoplasm. Functionally, exhibits a very high intrinsic GTPase hydrolysis rate. Involved in the addition of a carboxymethylaminomethyl (cmnm) group at the wobble position (U34) of certain tRNAs, forming tRNA-cmnm(5)s(2)U34. The polypeptide is tRNA modification GTPase MnmE (Mycoplasma mobile (strain ATCC 43663 / 163K / NCTC 11711) (Mesomycoplasma mobile)).